The following is a 149-amino-acid chain: Histone H2A (149 aa).

Residues 1-23 (METAGKAKKGFGGRKGGPRKKSV) are compositionally biased toward basic residues. Disordered regions lie at residues 1–25 (META…SVTR) and 127–149 (KTAE…PKKA). A compositionally biased stretch (basic and acidic residues) spans 127-138 (KTAEKAAKEPKS). 2 consecutive short sequence motifs (SPKK motif) follow at residues 138-141 (SPSK) and 145-148 (SPKK).

It belongs to the histone H2A family. In terms of assembly, the nucleosome is a histone octamer containing two molecules each of H2A, H2B, H3 and H4 assembled in one H3-H4 heterotetramer and two H2A-H2B heterodimers. The octamer wraps approximately 147 bp of DNA.

It localises to the nucleus. The protein localises to the chromosome. Core component of nucleosome. Nucleosomes wrap and compact DNA into chromatin, limiting DNA accessibility to the cellular machineries which require DNA as a template. Histones thereby play a central role in transcription regulation, DNA repair, DNA replication and chromosomal stability. DNA accessibility is regulated via a complex set of post-translational modifications of histones, also called histone code, and nucleosome remodeling. The polypeptide is Histone H2A (Petroselinum crispum (Parsley)).